We begin with the raw amino-acid sequence, 282 residues long: Bifunctional protein FolD (282 aa).

Residues 166-168 and Ile-232 each bind NADP(+); that span reads GAS.

This sequence belongs to the tetrahydrofolate dehydrogenase/cyclohydrolase family. In terms of assembly, homodimer.

The catalysed reaction is (6R)-5,10-methylene-5,6,7,8-tetrahydrofolate + NADP(+) = (6R)-5,10-methenyltetrahydrofolate + NADPH. It catalyses the reaction (6R)-5,10-methenyltetrahydrofolate + H2O = (6R)-10-formyltetrahydrofolate + H(+). The protein operates within one-carbon metabolism; tetrahydrofolate interconversion. Its function is as follows. Catalyzes the oxidation of 5,10-methylenetetrahydrofolate to 5,10-methenyltetrahydrofolate and then the hydrolysis of 5,10-methenyltetrahydrofolate to 10-formyltetrahydrofolate. The protein is Bifunctional protein FolD of Haemophilus influenzae (strain PittGG).